Consider the following 302-residue polypeptide: Zinc import ATP-binding protein ZnuC (302 aa).

One can recognise an ABC transporter domain in the interval 13 to 228 (VSLANAGVRR…PEYLKLFGRR (216 aa)). Residue 45–52 (GPNGSGKS) coordinates ATP.

Belongs to the ABC transporter superfamily. Zinc importer (TC 3.A.1.15.5) family. As to quaternary structure, the complex is composed of two ATP-binding proteins (ZnuC), two transmembrane proteins (ZnuB) and a solute-binding protein (ZnuA).

The protein resides in the cell inner membrane. The catalysed reaction is Zn(2+)(out) + ATP(in) + H2O(in) = Zn(2+)(in) + ADP(in) + phosphate(in) + H(+)(in). Its function is as follows. Part of the ABC transporter complex ZnuABC involved in zinc import. Responsible for energy coupling to the transport system. This is Zinc import ATP-binding protein ZnuC from Rhizobium meliloti (strain 1021) (Ensifer meliloti).